The following is a 212-amino-acid chain: Nucleoredoxin-like protein 1 (212 aa).

In terms of domain architecture, Thioredoxin spans 1–164 (MASLFSGRIL…AAEVLDRNFQ (164 aa)). The interval 191-212 (AARGGRDPGGGGGEEGGAGGLF) is disordered. Over residues 197-212 (DPGGGGGEEGGAGGLF) the composition is skewed to gly residues.

Belongs to the nucleoredoxin family. Interacts with isoform 1 of BSG.

The protein resides in the cell projection. Its subcellular location is the cilium. The protein localises to the photoreceptor outer segment. Plays an important role in retinal cone photoreceptor survival. In association with glucose transporter SLC16A1/GLUT1 and BSG, promotes retinal cone survival by enhancing aerobic glycolysis and accelerating the entry of glucose into photoreceptors. May play a role in cone cell viability, slowing down cone degeneration, does not seem to play a role in degenerating rods. This chain is Nucleoredoxin-like protein 1 (NXNL1), found in Homo sapiens (Human).